A 324-amino-acid polypeptide reads, in one-letter code: Beta-ketoacyl-[acyl-carrier-protein] synthase III (324 aa).

Catalysis depends on residues cysteine 112 and histidine 249. An ACP-binding region spans residues 250-254 (QANRR). Residue asparagine 279 is part of the active site.

This sequence belongs to the thiolase-like superfamily. FabH family. As to quaternary structure, homodimer.

The protein localises to the cytoplasm. It catalyses the reaction malonyl-[ACP] + acetyl-CoA + H(+) = 3-oxobutanoyl-[ACP] + CO2 + CoA. It participates in lipid metabolism; fatty acid biosynthesis. In terms of biological role, catalyzes the condensation reaction of fatty acid synthesis by the addition to an acyl acceptor of two carbons from malonyl-ACP. Catalyzes the first condensation reaction which initiates fatty acid synthesis and may therefore play a role in governing the total rate of fatty acid production. Possesses both acetoacetyl-ACP synthase and acetyl transacylase activities. Its substrate specificity determines the biosynthesis of branched-chain and/or straight-chain of fatty acids. This chain is Beta-ketoacyl-[acyl-carrier-protein] synthase III, found in Streptococcus pyogenes serotype M6 (strain ATCC BAA-946 / MGAS10394).